We begin with the raw amino-acid sequence, 366 residues long: Spermidine/putrescine import ATP-binding protein PotA (366 aa).

One can recognise an ABC transporter domain in the interval 14-247; that stretch reads ISARALRKVY…PADRFVADFI (234 aa). ATP is bound at residue 49–56; it reads GPSGCGKT.

It belongs to the ABC transporter superfamily. Spermidine/putrescine importer (TC 3.A.1.11.1) family. As to quaternary structure, the complex is composed of two ATP-binding proteins (PotA), two transmembrane proteins (PotB and PotC) and a solute-binding protein (PotD).

Its subcellular location is the cell inner membrane. The catalysed reaction is ATP + H2O + polyamine-[polyamine-binding protein]Side 1 = ADP + phosphate + polyamineSide 2 + [polyamine-binding protein]Side 1.. Its function is as follows. Part of the ABC transporter complex PotABCD involved in spermidine/putrescine import. Responsible for energy coupling to the transport system. This chain is Spermidine/putrescine import ATP-binding protein PotA, found in Ruegeria pomeroyi (strain ATCC 700808 / DSM 15171 / DSS-3) (Silicibacter pomeroyi).